The sequence spans 798 residues: Integrin beta-1-A (798 aa).

The N-terminal stretch at 1-21 is a signal peptide; it reads MAHYPVFTVGLLTCLVLCINA. The Extracellular segment spans residues 22 to 727; that stretch reads QQGGTECLKA…VKEPECPSGP (706 aa). The PSI domain occupies 27 to 77; it reads ECLKANAKSCGECIQAGPNCGWCTKVDFLQEGEPTSARCDDLAALKSKGCP. 28 disulfides stabilise this stretch: C28-C46, C36-C464, C39-C65, C49-C76, C206-C212, C260-C300, C400-C414, C434-C462, C466-C486, C477-C489, C491-C500, C502-C533, C516-C531, C525-C536, C538-C553, C555-C576, C560-C574, C568-C579, C581-C590, C592-C615, C599-C613, C607-C618, C620-C630, C633-C636, C640-C691, C646-C665, C649-C661, and C699-C723. The segment at 76–106 is disordered; the sequence is CPEDDIQNPRGRKQKLKDIPITSKGKGERMD. N109 and N131 each carry an N-linked (GlcNAc...) asparagine glycan. Residues 139–377 enclose the VWFA domain; that stretch reads DYPIDLYYLM…QLIIDSYNSL (239 aa). The Mg(2+) site is built by S151 and S153. Residues S153, D156, D157, and E188 each coordinate Ca(2+). N-linked (GlcNAc...) asparagine glycosylation is found at N211 and N223. Ca(2+) contacts are provided by N243, D245, P247, and E248. E248 lines the Mg(2+) pocket. 2 N-linked (GlcNAc...) asparagine glycosylation sites follow: N268 and N362. N416 is a glycosylation site (N-linked (GlcNAc...) asparagine). I-EGF domains are found at residues 466-501, 502-554, 555-591, and 592-631; these read CQDK…KECE, CSTD…KYCE, CDNF…SACD, and CSED…PTCE. N481 is a glycosylation site (N-linked (GlcNAc...) asparagine). N-linked (GlcNAc...) asparagine glycosylation is present at N520. An N-linked (GlcNAc...) asparagine glycan is attached at N584. N669 carries N-linked (GlcNAc...) asparagine glycosylation. Residues 728–751 traverse the membrane as a helical segment; it reads DIIPIVAGVVAGIVLIGLALLLIW. Over 752-798 the chain is Cytoplasmic; the sequence is KLLMIIHDRREFAKFEKEKMNAKWDTGENPIYKSAVTTVVNPKYEGK. At Y783 the chain carries Phosphotyrosine.

Belongs to the integrin beta chain family. As to quaternary structure, heterodimer of an alpha and a beta subunit.

The protein resides in the cell membrane. Its subcellular location is the cell projection. It localises to the invadopodium membrane. The protein localises to the ruffle membrane. It is found in the melanosome. The protein resides in the cleavage furrow. Its subcellular location is the lamellipodium. It localises to the ruffle. Its function is as follows. Beta integrins associate with alpha subunits to form receptor complexes that recognize the sequence R-G-D in a wide array of ligands. May be involved in osteoblast compaction. May play role in myoblast differentiation and fusion during skeletal myogenesis. In Xenopus laevis (African clawed frog), this protein is Integrin beta-1-A (itgb1-a).